The following is a 351-amino-acid chain: Short-chain dehydrogenase sdnK (351 aa).

NADP(+) contacts are provided by Ile-46, Thr-66, Glu-98, Tyr-224, Lys-228, and Thr-268. Tyr-224 functions as the Proton donor in the catalytic mechanism. Lys-228 (lowers pKa of active site Tyr) is an active-site residue.

The protein belongs to the short-chain dehydrogenases/reductases (SDR) family.

It functions in the pathway antibiotic biosynthesis. Its function is as follows. Short-chain dehydrogenase; part of the gene cluster that mediates the biosynthesis of sordarin and hypoxysordarin, glycoside antibiotics with a unique tetracyclic diterpene aglycone structure. First, the geranylgeranyl diphosphate synthase sdnC constructs GGDP from farnesyl diphosphate and isopentenyl diphosphate. The diterpene cyclase sdnA then catalyzes the cyclization of GGDP to afford cycloaraneosene. Cycloaraneosene is then hydroxylated four times by the putative cytochrome P450 monooxygenases sdnB, sdnE, sdnF and sdnH to give a hydroxylated cycloaraneosene derivative such as cycloaraneosene-8,9,13,19-tetraol. Although the order of the hydroxylations is unclear, at least C8, C9 and C13 of the cycloaraneosene skeleton are hydroxylated before the sordaricin formation. Dehydration of the 13-hydroxy group of the hydroxylated cycloaraneosene derivative might be catalyzed by an unassigned hypothetical protein such as sdnG and sdnP to construct the cyclopentadiene moiety. The FAD-dependent oxidoreductase sdnN is proposed to catalyze the oxidation at C9 of the hydroxylated cycloaraneosene derivative and also catalyze the Baeyer-Villiger oxidation to give the lactone intermediate. The presumed lactone intermediate would be hydrolyzed to give an acrolein moiety and a carboxylate moiety. Then, [4+2]cycloaddition would occur between the acrolein moiety and the cyclopentadiene moiety to give sordaricin. SdnN might also be involved in the [4+2]cycloaddition after the hypothesized oxidation to accommodate the oxidized product and prompt the [4+2]cycloaddition. GDP-6-deoxy-D-altrose may be biosynthesized from GDP-D-mannose by the putative GDP-mannose-4,6-dehydratase sdnI and the short-chain dehydrogenase sdnK. The glycosyltransferase sdnJ catalyzes the attachment of 6-deoxy-D-altrose onto the 19-hydroxy group of sordaricin to give 4'-O-demethylsordarin. The methyltransferase sdnD would complete the biosynthesis of sordarin. Sordarin can be further modified into hypoxysordarin. The unique acyl chain at the 3'-hydroxy group of hypoxysordarin would be constructed by an iterative type I PKS sdnO and the trans-acting polyketide methyltransferase sdnL. SdnL would be responsible for the introduction of an alpha-methyl group of the polyketide chain. Alternatively, the beta-lactamase-like protein sdnR might be responsible for the cleavage and transfer of the polyketide chain from the PKS sdnO to sordarin. Two putative cytochrome P450 monooxygenases, sdnQ and sdnT, might catalyze the epoxidations of the polyketide chain to complete the biosynthesis of hypoxysordarin. Transcriptional regulators sdnM and sdnS are presumably encoded for the transcriptional regulation of the expression of the sdn gene cluster. In Sordaria araneosa (Pleurage araneosa), this protein is Short-chain dehydrogenase sdnK.